The chain runs to 400 residues: Argininosuccinate synthase (400 aa).

ATP contacts are provided by residues 10–18 (AYSGGVDTS) and A38. Residue Y89 participates in L-citrulline binding. An ATP-binding site is contributed by G119. T121, N125, and D126 together coordinate L-aspartate. An L-citrulline-binding site is contributed by N125. 5 residues coordinate L-citrulline: R129, S177, S186, E262, and Y274.

The protein belongs to the argininosuccinate synthase family. Type 1 subfamily. Homotetramer.

Its subcellular location is the cytoplasm. The catalysed reaction is L-citrulline + L-aspartate + ATP = 2-(N(omega)-L-arginino)succinate + AMP + diphosphate + H(+). Its pathway is amino-acid biosynthesis; L-arginine biosynthesis; L-arginine from L-ornithine and carbamoyl phosphate: step 2/3. Activity decreases to 53.9% and 18.4% in the presence of 1 mM and 5 mM arginine, respectively. Activity also decreases to 80.1%, 78.1% and 92.1% in the presence of 5 mM ornithine, lysine and succinate, respectively. Activity does not decrease in the presence of glutamate, glutamine or asparagine. Catalyzes the condensation of citrulline and aspartate into argininosuccinate, the immediate precursor of arginine. SyArgG is the rate-limiting step in arginine biosynthesis in Synechocystis PCC 6803. The chain is Argininosuccinate synthase from Synechocystis sp. (strain ATCC 27184 / PCC 6803 / Kazusa).